Consider the following 275-residue polypeptide: NH(3)-dependent NAD(+) synthetase (275 aa).

46 to 53 (GISGGQDS) serves as a coordination point for ATP. Asp-52 contributes to the Mg(2+) binding site. Arg-140 is a binding site for deamido-NAD(+). Position 160 (Thr-160) interacts with ATP. Glu-165 lines the Mg(2+) pocket. 2 residues coordinate deamido-NAD(+): Lys-173 and Asp-180. Residues Lys-189 and Thr-211 each contribute to the ATP site. 260-261 (HK) lines the deamido-NAD(+) pocket.

It belongs to the NAD synthetase family. As to quaternary structure, homodimer.

It carries out the reaction deamido-NAD(+) + NH4(+) + ATP = AMP + diphosphate + NAD(+) + H(+). It functions in the pathway cofactor biosynthesis; NAD(+) biosynthesis; NAD(+) from deamido-NAD(+) (ammonia route): step 1/1. Functionally, catalyzes the ATP-dependent amidation of deamido-NAD to form NAD. Uses ammonia as a nitrogen source. The polypeptide is NH(3)-dependent NAD(+) synthetase (Escherichia coli (strain K12 / MC4100 / BW2952)).